The sequence spans 419 residues: Elongation factor Tu, chloroplastic (419 aa).

In terms of domain architecture, tr-type G spans 10–214; it reads KPHVNIGTIG…AVDSYIPTPK (205 aa). Residues 19 to 26 are G1; that stretch reads GHVDHGKT. 19 to 26 contributes to the GTP binding site; sequence GHVDHGKT. Thr-26 serves as a coordination point for Mg(2+). The G2 stretch occupies residues 60–64; sequence GITIN. Residues 81-84 are G3; it reads DCPG. Residues 81 to 85 and 136 to 139 each bind GTP; these read DCPGH and NKED. The segment at 136–139 is G4; that stretch reads NKED. The G5 stretch occupies residues 174-176; that stretch reads SAL.

Belongs to the TRAFAC class translation factor GTPase superfamily. Classic translation factor GTPase family. EF-Tu/EF-1A subfamily.

The protein localises to the plastid. The protein resides in the chloroplast. The catalysed reaction is GTP + H2O = GDP + phosphate + H(+). In terms of biological role, GTP hydrolase that promotes the GTP-dependent binding of aminoacyl-tRNA to the A-site of ribosomes during protein biosynthesis. This Chara vulgaris (Common stonewort) protein is Elongation factor Tu, chloroplastic (tufA).